The following is an 847-amino-acid chain: uncharacterized protein (847 aa).

Polar residues predominate over residues 116-126; that stretch reads TGSSELTTSKT. Disordered stretches follow at residues 116–153, 208–245, and 361–392; these read TGSS…TPIE, LKNF…RLSP, and DLEK…SNVI. A compositionally biased stretch (basic and acidic residues) spans 128-145; the sequence is IDVDTKEQENRLKQKAEA. Over residues 368-378 the composition is skewed to polar residues; the sequence is SSSASLSTNKL.

This is an uncharacterized protein from Caenorhabditis elegans.